The primary structure comprises 154 residues: L-alanine exporter AlaE (154 aa).

A run of 4 helical transmembrane segments spans residues 21-41 (FAMV…LSGM), 51-71 (LVAI…RDFF), 90-110 (ILAY…VIGA), and 115-135 (IVAA…VYGY).

The protein belongs to the AlaE exporter family.

Its subcellular location is the cell inner membrane. In terms of biological role, exports L-alanine. This is L-alanine exporter AlaE from Escherichia fergusonii (strain ATCC 35469 / DSM 13698 / CCUG 18766 / IAM 14443 / JCM 21226 / LMG 7866 / NBRC 102419 / NCTC 12128 / CDC 0568-73).